The primary structure comprises 111 residues: Universal stress protein B (111 aa).

2 helical membrane-spanning segments follow: residues 1–21 (MIST…NMAR) and 90–110 (FLLT…LMIW).

Belongs to the universal stress protein B family.

It is found in the cell inner membrane. The protein is Universal stress protein B of Salmonella arizonae (strain ATCC BAA-731 / CDC346-86 / RSK2980).